A 311-amino-acid chain; its full sequence is tRNA dimethylallyltransferase (311 aa).

8–15 lines the ATP pocket; that stretch reads GPTGVGKS. 10–15 contacts substrate; that stretch reads TGVGKS.

Belongs to the IPP transferase family. In terms of assembly, monomer. The cofactor is Mg(2+).

It carries out the reaction adenosine(37) in tRNA + dimethylallyl diphosphate = N(6)-dimethylallyladenosine(37) in tRNA + diphosphate. In terms of biological role, catalyzes the transfer of a dimethylallyl group onto the adenine at position 37 in tRNAs that read codons beginning with uridine, leading to the formation of N6-(dimethylallyl)adenosine (i(6)A). In Mycobacterium leprae (strain Br4923), this protein is tRNA dimethylallyltransferase.